Here is a 317-residue protein sequence, read N- to C-terminus: Probable F-box protein At2g36090 (317 aa).

In terms of domain architecture, F-box spans 25–74 (IESHILTRLDGATLASVSCASSHLHHLASNEILWSKICRSTWPSCSGGSR).

This is Probable F-box protein At2g36090 from Arabidopsis thaliana (Mouse-ear cress).